Consider the following 341-residue polypeptide: D-aspartate oxidase (341 aa).

FAD is bound by residues D36, R37, T43, S44, M50, G307, I311, and S312. A Microbody targeting signal motif is present at residues 339–341 (SKL).

This sequence belongs to the DAMOX/DASOX family. As to quaternary structure, tetramer. Interacts with PEX5; the interaction is direct and required for localization of DDO to the peroxisome. FAD is required as a cofactor. In terms of tissue distribution, expressed in liver and kidney (at protein level). In the brain, expressed in the frontal, temporal, and occipital lobes of the cortex, hippocampus, striatum, diencephalon, brainstem, cerebellum, spinal cord, plexus choroiderus and ependyma (at protein level). Also expressed in the lung, muscle, heart, spleen, small intestine and testis (at protein level).

The protein localises to the peroxisome matrix. The protein resides in the cytoplasm. It localises to the cytosol. The enzyme catalyses D-aspartate + O2 + H2O = oxaloacetate + H2O2 + NH4(+). It catalyses the reaction D-glutamate + O2 + H2O = H2O2 + 2-oxoglutarate + NH4(+). With respect to regulation, inhibited by aminooxyacetic acid, malonate, meso-tartrate and potassium bromide. Its function is as follows. Selectively catalyzes the oxidative deamination of acidic amino acids. Suppresses the level of D-aspartate in the brain, an amino acid that can act as an agonist for glutamate receptors. Protects the organism from the toxicity of D-amino acids. May also function in the intestine. This chain is D-aspartate oxidase, found in Rattus norvegicus (Rat).